We begin with the raw amino-acid sequence, 215 residues long: Thiamine-phosphate synthase (215 aa).

4-amino-2-methyl-5-(diphosphooxymethyl)pyrimidine-binding positions include 37–41 and asparagine 69; that span reads QLRIK. Residues aspartate 70 and aspartate 89 each coordinate Mg(2+). Serine 108 is a binding site for 4-amino-2-methyl-5-(diphosphooxymethyl)pyrimidine. 134–136 is a binding site for 2-[(2R,5Z)-2-carboxy-4-methylthiazol-5(2H)-ylidene]ethyl phosphate; it reads TQT. 4-amino-2-methyl-5-(diphosphooxymethyl)pyrimidine is bound at residue lysine 137. 2-[(2R,5Z)-2-carboxy-4-methylthiazol-5(2H)-ylidene]ethyl phosphate contacts are provided by residues glycine 166 and 186–187; that span reads VS.

It belongs to the thiamine-phosphate synthase family. Requires Mg(2+) as cofactor.

It catalyses the reaction 2-[(2R,5Z)-2-carboxy-4-methylthiazol-5(2H)-ylidene]ethyl phosphate + 4-amino-2-methyl-5-(diphosphooxymethyl)pyrimidine + 2 H(+) = thiamine phosphate + CO2 + diphosphate. It carries out the reaction 2-(2-carboxy-4-methylthiazol-5-yl)ethyl phosphate + 4-amino-2-methyl-5-(diphosphooxymethyl)pyrimidine + 2 H(+) = thiamine phosphate + CO2 + diphosphate. The enzyme catalyses 4-methyl-5-(2-phosphooxyethyl)-thiazole + 4-amino-2-methyl-5-(diphosphooxymethyl)pyrimidine + H(+) = thiamine phosphate + diphosphate. The protein operates within cofactor biosynthesis; thiamine diphosphate biosynthesis; thiamine phosphate from 4-amino-2-methyl-5-diphosphomethylpyrimidine and 4-methyl-5-(2-phosphoethyl)-thiazole: step 1/1. In terms of biological role, condenses 4-methyl-5-(beta-hydroxyethyl)thiazole monophosphate (THZ-P) and 2-methyl-4-amino-5-hydroxymethyl pyrimidine pyrophosphate (HMP-PP) to form thiamine monophosphate (TMP). The protein is Thiamine-phosphate synthase of Yersinia pseudotuberculosis serotype I (strain IP32953).